Here is an 821-residue protein sequence, read N- to C-terminus: Phenylalanine--tRNA ligase beta subunit (821 aa).

The 111-residue stretch at 39–149 folds into the tRNA-binding domain; that stretch reads SENVKGIVLG…EDIALNHNLG (111 aa). Positions 414–507 constitute a B5 domain; sequence LKKILIPLRR…RLIGYDMFDL (94 aa). The Mg(2+) site is built by aspartate 485, aspartate 491, glutamate 494, and glutamate 495. The region spanning 727–820 is the FDX-ACB domain; the sequence is PTVPKMERDI…IEKKFSTKLR (94 aa).

The protein belongs to the phenylalanyl-tRNA synthetase beta subunit family. Type 1 subfamily. In terms of assembly, tetramer of two alpha and two beta subunits. It depends on Mg(2+) as a cofactor.

The protein resides in the cytoplasm. It carries out the reaction tRNA(Phe) + L-phenylalanine + ATP = L-phenylalanyl-tRNA(Phe) + AMP + diphosphate + H(+). In Prochlorococcus marinus subsp. pastoris (strain CCMP1986 / NIES-2087 / MED4), this protein is Phenylalanine--tRNA ligase beta subunit.